A 301-amino-acid polypeptide reads, in one-letter code: Protein FdhE homolog (301 aa).

The protein belongs to the FdhE family.

Its subcellular location is the cytoplasm. Necessary for formate dehydrogenase activity. This is Protein FdhE homolog from Shewanella baltica (strain OS185).